A 391-amino-acid polypeptide reads, in one-letter code: Succinate--CoA ligase [ADP-forming] subunit beta (391 aa).

An ATP-grasp domain is found at arginine 9 to arginine 237. ATP is bound by residues lysine 46, glycine 53–glycine 55, alanine 95, and glutamate 100. 2 residues coordinate Mg(2+): asparagine 192 and aspartate 206. Substrate contacts are provided by residues asparagine 257 and glycine 320 to threonine 322.

It belongs to the succinate/malate CoA ligase beta subunit family. As to quaternary structure, heterotetramer of two alpha and two beta subunits. Requires Mg(2+) as cofactor.

The catalysed reaction is succinate + ATP + CoA = succinyl-CoA + ADP + phosphate. It catalyses the reaction GTP + succinate + CoA = succinyl-CoA + GDP + phosphate. It functions in the pathway carbohydrate metabolism; tricarboxylic acid cycle; succinate from succinyl-CoA (ligase route): step 1/1. Its function is as follows. Succinyl-CoA synthetase functions in the citric acid cycle (TCA), coupling the hydrolysis of succinyl-CoA to the synthesis of either ATP or GTP and thus represents the only step of substrate-level phosphorylation in the TCA. The beta subunit provides nucleotide specificity of the enzyme and binds the substrate succinate, while the binding sites for coenzyme A and phosphate are found in the alpha subunit. The sequence is that of Succinate--CoA ligase [ADP-forming] subunit beta from Cutibacterium acnes (strain DSM 16379 / KPA171202) (Propionibacterium acnes).